The chain runs to 450 residues: Probable ECA polymerase (450 aa).

A run of 11 helical transmembrane segments spans residues 6–26 (FSGL…LTWF), 37–57 (VFFS…TSVL), 63–83 (VGVA…CFYA), 118–138 (VILM…NGFL), 155–175 (GVAL…VYFL), 181–201 (AWLF…MIVG), 207–227 (IIIA…ISLW), 228–248 (MLAA…LKRY), 341–361 (LVVM…GLII), 378–398 (YKAA…IVLA), and 410–430 (VFFI…YWLF).

This sequence belongs to the WzyE family. As to quaternary structure, probably part of a complex composed of WzxE, WzyE and WzzE.

The protein resides in the cell inner membrane. It functions in the pathway bacterial outer membrane biogenesis; enterobacterial common antigen biosynthesis. Its function is as follows. Probably involved in the polymerization of enterobacterial common antigen (ECA) trisaccharide repeat units. This Escherichia coli O139:H28 (strain E24377A / ETEC) protein is Probable ECA polymerase.